Consider the following 250-residue polypeptide: MANIHIVIPARLKSTRLPNKMLADIAGKPMIQRVYEQVTKSKFDSIIIATDSQKIKDIAESFGAKVVLTRDDHQSGTDRIAEAVTKLGFAYEDIVVNVQGDEPLIPIENIEQAAQLLIDKSEAVVSTLCEKITDVEDIYNPNNVKVVFDKNNYALYFSRASIPFERGFSEKEQINISEFFRHIGIYAYRVAFLKHYAELTVSPIEKYEALEQLRVLYNGYKIAIEQSAKSTPAGVDTLQDLEKVRKLFNV.

The protein belongs to the KdsB family.

Its subcellular location is the cytoplasm. It carries out the reaction 3-deoxy-alpha-D-manno-oct-2-ulosonate + CTP = CMP-3-deoxy-beta-D-manno-octulosonate + diphosphate. The protein operates within nucleotide-sugar biosynthesis; CMP-3-deoxy-D-manno-octulosonate biosynthesis; CMP-3-deoxy-D-manno-octulosonate from 3-deoxy-D-manno-octulosonate and CTP: step 1/1. Its pathway is bacterial outer membrane biogenesis; lipopolysaccharide biosynthesis. Functionally, activates KDO (a required 8-carbon sugar) for incorporation into bacterial lipopolysaccharide in Gram-negative bacteria. This Francisella tularensis subsp. holarctica (strain LVS) protein is 3-deoxy-manno-octulosonate cytidylyltransferase.